The chain runs to 129 residues: uncharacterized protein (129 aa).

The signal sequence occupies residues 1–27 (MLMRKKKLLSRISFGSLFLLCGTILSA). The N-palmitoyl cysteine moiety is linked to residue Cys-28. Cys-28 carries S-diacylglycerol cysteine lipidation.

It belongs to the MG439/MG440 family.

It localises to the cell membrane. This is an uncharacterized protein from Mycoplasma pneumoniae (strain ATCC 29342 / M129 / Subtype 1) (Mycoplasmoides pneumoniae).